The following is a 553-amino-acid chain: Aminotransferase FUM8 (553 aa).

A signal peptide spans 1-25; the sequence is MSPAPAILALRRVYNFCLLVDEAHG. A glycan (N-linked (GlcNAc...) asparagine) is linked at Asn480.

The protein belongs to the class-II pyridoxal-phosphate-dependent aminotransferase family. BioF subfamily. Requires pyridoxal 5'-phosphate as cofactor.

Its subcellular location is the endoplasmic reticulum. It functions in the pathway mycotoxin biosynthesis. Functionally, aminotransferase; part of the gene cluster that mediates the biosynthesis of fumonisins B1 (FB1), B2 (FB2), B3 (FB3), and B4 (FB4), which are carcinogenic mycotoxins. Within the pathway, FUM8 catalyzes the release of the C-18 polyketide chain from the highly reducing polyketide synthase FUM1 by a nucleophilic attack of a carbanion, which is derived from R-carbon of alanine by decarboxylation, on the carbonyl carbon of polyketide acyl chain. The biosynthesis starts with the FUM1-catalyzed carbon chain assembly from one molecule of acetyl-CoA, eight molecules of malonyl-CoA, and two molecules of methionine (in S-adenosyl form). The C18 polyketide chain is released from the enzyme by a nucleophilic attack of a carbanion, which is derived from R-carbon of alanine by decarboxylation, on the carbonyl carbon of polyketide acyl chain. This step is catalyzed by the pyridoxal 5'-phosphate-dependent aminoacyl transferase FUM8. The resultant 3-keto intermediate is then stereospecifically reduced to a 3-hydroxyl product by reductase FUM13. Subsequent oxidations at C-10 by the cytochrome P450 monooxygenase FUM2, C-14 and C-15 by FUM6, FUM12 or FUM15, tricarballylic esterification of the hydroxyl groups on C-14 and C-15 by acyltransferase FUM14, and C-5 hydroxylation by 2-keto-glutarate-dependent dioxygenase FUM3 furnish the biosynthesis of fumonisins. The tricarballylic moieties are most likely derived from the citric acid cycle, and their addition to the carbon backbone may involve FUM7, FUM10, FUM11 and FUM14. In Gibberella moniliformis (strain M3125 / FGSC 7600) (Maize ear and stalk rot fungus), this protein is Aminotransferase FUM8.